Here is an 88-residue protein sequence, read N- to C-terminus: Co-chaperonin GroES (88 aa).

It belongs to the GroES chaperonin family. As to quaternary structure, heptamer of 7 subunits arranged in a ring. Interacts with the chaperonin GroEL.

The protein resides in the cytoplasm. Its function is as follows. Together with the chaperonin GroEL, plays an essential role in assisting protein folding. The GroEL-GroES system forms a nano-cage that allows encapsulation of the non-native substrate proteins and provides a physical environment optimized to promote and accelerate protein folding. GroES binds to the apical surface of the GroEL ring, thereby capping the opening of the GroEL channel. This Treponema denticola (strain ATCC 35405 / DSM 14222 / CIP 103919 / JCM 8153 / KCTC 15104) protein is Co-chaperonin GroES.